A 135-amino-acid polypeptide reads, in one-letter code: Transcription antitermination protein NusB (135 aa).

This sequence belongs to the NusB family.

Involved in transcription antitermination. Required for transcription of ribosomal RNA (rRNA) genes. Binds specifically to the boxA antiterminator sequence of the ribosomal RNA (rrn) operons. The sequence is that of Transcription antitermination protein NusB from Clostridium perfringens (strain ATCC 13124 / DSM 756 / JCM 1290 / NCIMB 6125 / NCTC 8237 / Type A).